We begin with the raw amino-acid sequence, 635 residues long: ATP-binding protein Uup (635 aa).

2 ABC transporter domains span residues 1-253 and 320-546; these read MSLI…RVEE and FEME…KTEE. ATP is bound by residues 36–43 and 352–359; these read GRNGAGKS and GPNGCGKT. Residues 551-635 are C-terminal domain (CTD), binds DNA, required to complement a deletion mutant; that stretch reads KAETVKRSSS…EYLEALKNGG (85 aa). A coiled-coil region spans residues 563–631; sequence SYKLQRELEQ…FERWEYLEAL (69 aa).

The protein belongs to the ABC transporter superfamily. ABCF family. Uup subfamily.

It is found in the cytoplasm. It carries out the reaction ATP + H2O = ADP + phosphate + H(+). With respect to regulation, ATPase activity inhibited by N-ethylmaleimide but not by vanadate. Its function is as follows. Probably plays a role in ribosome assembly or function; overexpression suppresses cold-sensitive growth of a bipA deletion. May be involved in resolution of branched DNA intermediates that result from template switching in postreplication gaps. Binds DNA at Holliday junctions. May be involved in the correct segregation of nucleoids. Has ATPase activity, binds DNA non-sequence specifically; the presence of DNA does not change the ATPase activity. Mutations in this gene cause an increase in RecA-independent precise excision of transposons and insertion elements, and also reduce bacteriophage Mu growth. Genetic interactions among priB, dam, lexA, nagC, polA, rdgB, rdgB, rep and uup link the PriA-PriB replication restart pathway to DNA double-strand break repair. The protein is ATP-binding protein Uup of Escherichia coli (strain K12).